The sequence spans 547 residues: DEAD-box ATP-dependent RNA helicase 31 (547 aa).

Positions 1 to 34 are enriched in acidic residues; sequence MFDFGLSEDDSELGEVDEDDGPSGFEDDLFDDEG. The tract at residues 1–74 is disordered; it reads MFDFGLSEDD…HTRESGGGDS (74 aa). Positions 53–70 are enriched in basic and acidic residues; it reads IKGEPIDQEGVVHTRESG. The short motif at 79-107 is the Q motif element; that stretch reads TRFDECSLSPLTLKGVKAAGYERMTAVQE. One can recognise a Helicase ATP-binding domain in the interval 110-293; that stretch reads LPIILKGKDV…HIAMKRDLEF (184 aa). An ATP-binding site is contributed by 123–130; it reads AKTGTGKT. A DEAD box motif is present at residues 241–244; that stretch reads DEAD. The region spanning 327–478 is the Helicase C-terminal domain; the sequence is LLTDHISENV…TKRKVEKALA (152 aa).

The protein belongs to the DEAD box helicase family.

It carries out the reaction ATP + H2O = ADP + phosphate + H(+). This is DEAD-box ATP-dependent RNA helicase 31 from Oryza sativa subsp. japonica (Rice).